The sequence spans 363 residues: Chorismate synthase (363 aa).

NADP(+) contacts are provided by R47 and R53. Residues 124–126 (RSS), G286, 301–305 (KPTAT), and R327 each bind FMN.

It belongs to the chorismate synthase family. As to quaternary structure, homotetramer. The cofactor is FMNH2.

It carries out the reaction 5-O-(1-carboxyvinyl)-3-phosphoshikimate = chorismate + phosphate. It participates in metabolic intermediate biosynthesis; chorismate biosynthesis; chorismate from D-erythrose 4-phosphate and phosphoenolpyruvate: step 7/7. In terms of biological role, catalyzes the anti-1,4-elimination of the C-3 phosphate and the C-6 proR hydrogen from 5-enolpyruvylshikimate-3-phosphate (EPSP) to yield chorismate, which is the branch point compound that serves as the starting substrate for the three terminal pathways of aromatic amino acid biosynthesis. This reaction introduces a second double bond into the aromatic ring system. The polypeptide is Chorismate synthase (Thermosynechococcus vestitus (strain NIES-2133 / IAM M-273 / BP-1)).